Reading from the N-terminus, the 363-residue chain is Cobalt-precorrin-5B C(1)-methyltransferase (363 aa).

The protein belongs to the CbiD family.

The enzyme catalyses Co-precorrin-5B + S-adenosyl-L-methionine = Co-precorrin-6A + S-adenosyl-L-homocysteine. It functions in the pathway cofactor biosynthesis; adenosylcobalamin biosynthesis; cob(II)yrinate a,c-diamide from sirohydrochlorin (anaerobic route): step 6/10. Catalyzes the methylation of C-1 in cobalt-precorrin-5B to form cobalt-precorrin-6A. The sequence is that of Cobalt-precorrin-5B C(1)-methyltransferase from Burkholderia mallei (strain ATCC 23344).